A 391-amino-acid chain; its full sequence is Putative 1-acyl-sn-glycerol-3-phosphate acyltransferase acl-12 (391 aa).

2 helical membrane passes run 47-67 and 84-104; these read FFFMTAWVVPVACVITVSLLF and LCAMVNAHWNAVSVFVGATVT. The HXXXXD motif motif lies at 124 to 129; the sequence is HLGLLD.

This sequence belongs to the 1-acyl-sn-glycerol-3-phosphate acyltransferase family.

Its subcellular location is the membrane. The catalysed reaction is a 1-acyl-sn-glycero-3-phosphate + an acyl-CoA = a 1,2-diacyl-sn-glycero-3-phosphate + CoA. It participates in phospholipid metabolism; CDP-diacylglycerol biosynthesis; CDP-diacylglycerol from sn-glycerol 3-phosphate: step 2/3. Its function is as follows. Converts lysophosphatidic acid (LPA) into phosphatidic acid by incorporating an acyl moiety at the sn-2 position of the glycerol backbone. The polypeptide is Putative 1-acyl-sn-glycerol-3-phosphate acyltransferase acl-12 (acl-12) (Caenorhabditis elegans).